Here is a 184-residue protein sequence, read N- to C-terminus: Myosin regulatory light chain 1 (184 aa).

The segment at 1-29 is disordered; it reads MFSSKENSLGAKRAPFSSNTTSSQRVAAQ. At S36 the chain carries Phosphoserine. EF-hand domains are found at residues 45 to 80 and 114 to 149; these read SQIQ…LNQD and SPRN…MGDR. D58, D60, D62, N64, and D69 together coordinate Ca(2+).

As to quaternary structure, binds to myosin II chains myo2 and myo3.

Its subcellular location is the cytoplasm. The protein is Myosin regulatory light chain 1 (rlc1) of Schizosaccharomyces pombe (strain 972 / ATCC 24843) (Fission yeast).